The following is a 273-amino-acid chain: NAD-dependent protein deacetylase 2 (273 aa).

The Deacetylase sirtuin-type domain occupies 1 to 273 (MSNAPLANQS…RCEAALAFLL (273 aa)). NAD(+) is bound by residues 26-46 (GAGC…GNWK) and 104-107 (QNVD). The active-site Proton acceptor is the H122. Zn(2+) is bound by residues C130, C133, C181, and C184. NAD(+) is bound by residues 221–223 (GSS), 247–249 (NLG), and C265.

It belongs to the sirtuin family. Class II subfamily. Zn(2+) serves as cofactor.

It localises to the cytoplasm. The catalysed reaction is N(6)-acetyl-L-lysyl-[protein] + NAD(+) + H2O = 2''-O-acetyl-ADP-D-ribose + nicotinamide + L-lysyl-[protein]. NAD-dependent protein deacetylase which modulates the activities of several enzymes which are inactive in their acetylated form. The chain is NAD-dependent protein deacetylase 2 from Bradyrhizobium diazoefficiens (strain JCM 10833 / BCRC 13528 / IAM 13628 / NBRC 14792 / USDA 110).